Consider the following 192-residue polypeptide: Xanthine phosphoribosyltransferase (192 aa).

The xanthine site is built by Leu-20 and Asn-27. 128 to 132 (ANGDA) contacts 5-phospho-alpha-D-ribose 1-diphosphate. Lys-156 is a binding site for xanthine.

This sequence belongs to the purine/pyrimidine phosphoribosyltransferase family. Xpt subfamily. In terms of assembly, homodimer.

It localises to the cytoplasm. It carries out the reaction XMP + diphosphate = xanthine + 5-phospho-alpha-D-ribose 1-diphosphate. The protein operates within purine metabolism; XMP biosynthesis via salvage pathway; XMP from xanthine: step 1/1. In terms of biological role, converts the preformed base xanthine, a product of nucleic acid breakdown, to xanthosine 5'-monophosphate (XMP), so it can be reused for RNA or DNA synthesis. This Staphylococcus epidermidis (strain ATCC 35984 / DSM 28319 / BCRC 17069 / CCUG 31568 / BM 3577 / RP62A) protein is Xanthine phosphoribosyltransferase.